Consider the following 231-residue polypeptide: Large ribosomal subunit protein uL1 (231 aa).

It belongs to the universal ribosomal protein uL1 family. In terms of assembly, part of the 50S ribosomal subunit.

In terms of biological role, binds directly to 23S rRNA. The L1 stalk is quite mobile in the ribosome, and is involved in E site tRNA release. Protein L1 is also a translational repressor protein, it controls the translation of the L11 operon by binding to its mRNA. This chain is Large ribosomal subunit protein uL1, found in Agrobacterium fabrum (strain C58 / ATCC 33970) (Agrobacterium tumefaciens (strain C58)).